Here is a 138-residue protein sequence, read N- to C-terminus: Basic phospholipase A2 homolog CTs-K49a (138 aa).

A signal peptide spans Met1–Gly16. 6 disulfide bridges follow: Cys42/Cys131, Cys44/Cys60, Cys59/Cys111, Cys65/Cys138, Cys66/Cys104, and Cys91/Cys102. The interval Lys121–Lys133 is important for membrane-damaging activities in eukaryotes and bacteria; heparin-binding.

This sequence belongs to the phospholipase A2 family. Group II subfamily. K49 sub-subfamily. As to expression, expressed by the venom gland.

The protein resides in the secreted. Its function is as follows. Snake venom phospholipase A2 homolog that lacks catalytic activity. It shows myotoxic and weak anticoagulant activities. A model of myotoxic mechanism has been proposed: an apo Lys49-PLA2 is activated by the entrance of a hydrophobic molecule (e.g. fatty acid) at the hydrophobic channel of the protein leading to a reorientation of a monomer. This reorientation causes a transition between 'inactive' to 'active' states, causing alignment of C-terminal and membrane-docking sites (MDoS) side-by-side and putting the membrane-disruption sites (MDiS) in the same plane, exposed to solvent and in a symmetric position for both monomers. The MDoS region stabilizes the toxin on membrane by the interaction of charged residues with phospholipid head groups. Subsequently, the MDiS region destabilizes the membrane with penetration of hydrophobic residues. This insertion causes a disorganization of the membrane, allowing an uncontrolled influx of ions (i.e. calcium and sodium), and eventually triggering irreversible intracellular alterations and cell death. This Trimeresurus stejnegeri (Chinese green tree viper) protein is Basic phospholipase A2 homolog CTs-K49a.